We begin with the raw amino-acid sequence, 216 residues long: Somatotropin (216 aa).

The signal sequence occupies residues 1 to 26 (MAAGPRTSMLLAFALLCLPWTQEVGA). Position 45 (His45) interacts with Zn(2+). A disulfide bond links Cys78 and Cys189. A Phosphoserine modification is found at Ser131. Glu198 is a binding site for Zn(2+). Cysteines 206 and 214 form a disulfide.

The protein belongs to the somatotropin/prolactin family.

It localises to the secreted. In terms of biological role, plays an important role in growth control. Its major role in stimulating body growth is to stimulate the liver and other tissues to secrete IGF1. It stimulates both the differentiation and proliferation of myoblasts. It also stimulates amino acid uptake and protein synthesis in muscle and other tissues. The sequence is that of Somatotropin (GH1) from Delphinus delphis (Short-beaked common dolphin).